The chain runs to 714 residues: Pre-mRNA-splicing factor CLF1 (714 aa).

HAT repeat units lie at residues 48–80 (SFQLTKRKEYEQQLNKNRLNFGQWLRYAKWEVK), 83–115 (HDFPRARSIFERALEVNVQHIPFWTHYIQFELS), 117–149 (KNITHARNLLDRAVTTLPRVDKLWFLYVQTEET), 151–182 (KNYQMVRIIFERWLSWNPNPSAWDAYINYEKR), 184–215 (DEYDNAREIYIRYVQIHSSGEIWLKWIDFEMN), 265–305 (KEYE…FEKS), 315–347 (SIMIKRKLKYEEEVNKSPSDYDSWWSYISILQQ), 349–384 (DNNEVTRETFERAIKVIPTDAFKSTVWRRYIYIWVK), 394–430 (GSIENGRNIWNKALKVIPHKRFTFAKIWISFAQFEIR), 435–470 (NGLASARKILGRSIGQSSTVKPKRKLFKFYIELEQK), 472–510 (GEWDRVRKLYEKWLELSLVGENNLSTINSLLTYIDFEKN), and 555–586 (MRYAEARSLYRKLVERVSTPKVWISFALFESS).

This sequence belongs to the crooked-neck family. As to quaternary structure, associated with the spliceosome.

Its subcellular location is the nucleus. In terms of biological role, involved in pre-mRNA splicing and cell cycle progression. Required for the spliceosome assembly and initiation of the DNA replication. The protein is Pre-mRNA-splicing factor CLF1 (CLF1) of Debaryomyces hansenii (strain ATCC 36239 / CBS 767 / BCRC 21394 / JCM 1990 / NBRC 0083 / IGC 2968) (Yeast).